The primary structure comprises 591 residues: UvrABC system protein C (591 aa).

One can recognise a GIY-YIG domain in the interval 14–91 (DQPGCYLMKD…IKKHDPKYNV (78 aa)). Residues 196–231 (KEVKVELEKKMHKAAEELNFERAKELRDTLGYMEAV) form the UVR domain.

It belongs to the UvrC family. As to quaternary structure, interacts with UvrB in an incision complex.

The protein resides in the cytoplasm. In terms of biological role, the UvrABC repair system catalyzes the recognition and processing of DNA lesions. UvrC both incises the 5' and 3' sides of the lesion. The N-terminal half is responsible for the 3' incision and the C-terminal half is responsible for the 5' incision. This chain is UvrABC system protein C, found in Halalkalibacterium halodurans (strain ATCC BAA-125 / DSM 18197 / FERM 7344 / JCM 9153 / C-125) (Bacillus halodurans).